Consider the following 103-residue polypeptide: Large ribosomal subunit protein bL21 (103 aa).

Belongs to the bacterial ribosomal protein bL21 family. As to quaternary structure, part of the 50S ribosomal subunit. Contacts protein L20.

In terms of biological role, this protein binds to 23S rRNA in the presence of protein L20. This Nitrosospira multiformis (strain ATCC 25196 / NCIMB 11849 / C 71) protein is Large ribosomal subunit protein bL21.